The following is a 226-amino-acid chain: Lipoprotein-releasing system ATP-binding protein LolD 1 (226 aa).

The 221-residue stretch at 6-226 (LRLDKVTRSF…TLREGKVVAA (221 aa)) folds into the ABC transporter domain. Residue 42–49 (GPSGAGKS) coordinates ATP.

It belongs to the ABC transporter superfamily. Lipoprotein translocase (TC 3.A.1.125) family. As to quaternary structure, the complex is composed of two ATP-binding proteins (LolD) and two transmembrane proteins (LolC and LolE).

It localises to the cell inner membrane. Part of the ABC transporter complex LolCDE involved in the translocation of mature outer membrane-directed lipoproteins, from the inner membrane to the periplasmic chaperone, LolA. Responsible for the formation of the LolA-lipoprotein complex in an ATP-dependent manner. This chain is Lipoprotein-releasing system ATP-binding protein LolD 1, found in Rhodospirillum rubrum (strain ATCC 11170 / ATH 1.1.1 / DSM 467 / LMG 4362 / NCIMB 8255 / S1).